The sequence spans 253 residues: tRNA pseudouridine synthase A (253 aa).

The active-site Nucleophile is the Asp51. Tyr110 serves as a coordination point for substrate.

Belongs to the tRNA pseudouridine synthase TruA family. As to quaternary structure, homodimer.

The enzyme catalyses uridine(38/39/40) in tRNA = pseudouridine(38/39/40) in tRNA. In terms of biological role, formation of pseudouridine at positions 38, 39 and 40 in the anticodon stem and loop of transfer RNAs. The sequence is that of tRNA pseudouridine synthase A from Wolinella succinogenes (strain ATCC 29543 / DSM 1740 / CCUG 13145 / JCM 31913 / LMG 7466 / NCTC 11488 / FDC 602W) (Vibrio succinogenes).